A 102-amino-acid polypeptide reads, in one-letter code: MYAIIETGGKQIKVEAGQEIYIEKLDVEAGETVTFDKVLFVGGENVKVGSPVVEGATVTAKVEKHGRAKKIIVFKYKAKKNNRKKQGHRQPYTKLVVEAINA.

This sequence belongs to the bacterial ribosomal protein bL21 family. In terms of assembly, part of the 50S ribosomal subunit. Contacts protein L20.

In terms of biological role, this protein binds to 23S rRNA in the presence of protein L20. This is Large ribosomal subunit protein bL21 from Bacillus cytotoxicus (strain DSM 22905 / CIP 110041 / 391-98 / NVH 391-98).